The chain runs to 475 residues: ATP synthase subunit beta (475 aa).

An ATP-binding site is contributed by G156–T163.

This sequence belongs to the ATPase alpha/beta chains family. In terms of assembly, F-type ATPases have 2 components, CF(1) - the catalytic core - and CF(0) - the membrane proton channel. CF(1) has five subunits: alpha(3), beta(3), gamma(1), delta(1), epsilon(1). CF(0) has three main subunits: a(1), b(2) and c(9-12). The alpha and beta chains form an alternating ring which encloses part of the gamma chain. CF(1) is attached to CF(0) by a central stalk formed by the gamma and epsilon chains, while a peripheral stalk is formed by the delta and b chains.

The protein resides in the cell membrane. The catalysed reaction is ATP + H2O + 4 H(+)(in) = ADP + phosphate + 5 H(+)(out). Functionally, produces ATP from ADP in the presence of a proton gradient across the membrane. The catalytic sites are hosted primarily by the beta subunits. The chain is ATP synthase subunit beta from Mycoplasma pneumoniae (strain ATCC 29342 / M129 / Subtype 1) (Mycoplasmoides pneumoniae).